The chain runs to 624 residues: Kelch-like ECH-associated protein 1 (624 aa).

An S-(2-succinyl)cysteine modification is found at Cys-38. Residues 77–149 (CDVTLQVKYQ…AYTASISMGE (73 aa)) enclose the BTB domain. An N5-[4-(S-L-cysteinyl)-5-methyl-1H-imidazol-2-yl]-L-ornithine (Arg-Cys) (interchain with C-151 in KEAP1) cross-link involves residue Arg-135. Residue Cys-151 is modified to S-(2,3-dicarboxypropyl)cysteine; alternate. Cys-151 carries the post-translational modification S-(2-succinyl)cysteine; alternate. An S-nitrosocysteine; alternate modification is found at Cys-151. An N5-[4-(S-L-cysteinyl)-5-methyl-1H-imidazol-2-yl]-L-ornithine (Cys-Arg) (interchain with R-135 in KEAP1) cross-link involves residue Cys-151. The BACK domain occupies 184–286 (AIGIANFAEQ…TPNFLQMQLQ (103 aa)). Cys-241 is modified (S-(2-succinyl)cysteine). An S-(2,3-dicarboxypropyl)cysteine mark is found at Cys-257 and Cys-273. Residue Cys-288 is modified to S-(2,3-dicarboxypropyl)cysteine; alternate. Position 288 is an S-(2-succinyl)cysteine; alternate (Cys-288). An S-(2-succinyl)cysteine modification is found at Cys-319. Kelch repeat units lie at residues 327-372 (LIYT…VVGG), 373-423 (LLYA…VIDG), 424-470 (HIYA…VLNR), 471-517 (LLYA…VLHN), 518-564 (CIYA…VHQG), and 565-611 (RIYV…VTME). S-cGMP-cysteine is present on Cys-434. The residue at position 613 (Cys-613) is an S-(2-succinyl)cysteine.

This sequence belongs to the KEAP1 family. In terms of assembly, component of the BCR(KEAP1) E3 ubiquitin ligase complex, at least composed of 2 molecules of CUL3, 2 molecules of KEAP1, and RBX1. Interacts with NFE2L2/NRF2; the interaction is direct. Forms a ternary complex with NFE2L2/NRF2 and PGAM5. Interacts with (phosphorylated) SQSTM1/p62; the interaction is direct and inactivates the BCR(KEAP1) complex by sequestering it in inclusion bodies, promoting its degradation. Interacts with NFE2L1. Interacts with BPTF and PTMA. Interacts with MAP1LC3B. Interacts indirectly with ENC1. Interacts with SESN1 and SESN2. Interacts with HSP90AA1 and HSP90AB1. Interacts with PGCKA1; this interaction prevents the ubiquitination of KEAP1 by TRIM25, thus protecting KEAP1 from degradation. (Microbial infection) Interacts with ebolavirus protein VP24; this interaction activates transcription factor NFE2L2/NRF2 by blocking its interaction with KEAP1. Post-translationally, non-enzymatic covalent modifications of reactive cysteines by electrophile metabolites inactivate the BCR(KEAP1) complex. Accumulation of fumarate promotes the formation of cysteine S-succination (S-(2-succinyl)cysteine), leading to inactivate the BCR(KEAP1) complex and promote NFE2L2/NRF2 nuclear accumulation and activation. Nitric oxide-dependent 8-Nitro-cGMP formation promotes cysteine guanylation (S-cGMP-cysteine), leading to NFE2L2/NRF2 nuclear accumulation and activation. Itaconate, an anti-inflammatory metabolite generated in response to lipopolysaccharide, alkylates cysteines, activating NFE2L2/NRF2. Methylglyoxal, a reactive metabolite that accumulates when the glycolytic enzyme PGK1 is inhibited, promotes formation of a methylimidazole cross-link between proximal Cys-151 and Arg-135 on another KEAP1 molecule, resulting in an inactive dimer that inactivates the BCR(KEAP1) complex. In terms of processing, degraded via a proteasomal-independent process during selective autophagy: interaction with phosphorylated SQSTM1/p62 sequesters KEAP1 in inclusion bodies, leading to its degradation. Auto-ubiquitinated by the BCR(KEAP1) complex. Quinone-induced oxidative stress, but not sulforaphane, increases its ubiquitination. Ubiquitination and subsequent degradation is most pronounced following prolonged exposure of cells to oxidative stress, particularly in glutathione-deficient cells that are highly susceptible to oxidative stress. Deubiquitinated by USP25; leading to stabilization. Ubiquitinated by TRIM25; leading to degradation upon ER stress. Broadly expressed, with highest levels in skeletal muscle.

It localises to the cytoplasm. The protein localises to the nucleus. Its pathway is protein modification; protein ubiquitination. Its activity is regulated as follows. Ubiquitin ligase activity of the BCR(KEAP1) complex is inhibited by oxidative stress and electrophile metabolites such as sulforaphane. Electrophile metabolites react with reactive cysteine residues in KEAP1 and trigger non-enzymatic covalent modifications of these cysteine residues, leading to inactivate the ubiquitin ligase activity of the BCR(KEAP1) complex. Selective autophagy also inactivates the BCR(KEAP1) complex via interaction between KEAP1 and SQSTM1/p62, which sequesters the complex in inclusion bodies and promotes its degradation. Substrate-specific adapter of a BCR (BTB-CUL3-RBX1) E3 ubiquitin ligase complex that regulates the response to oxidative stress by targeting NFE2L2/NRF2 for ubiquitination. KEAP1 acts as a key sensor of oxidative and electrophilic stress: in normal conditions, the BCR(KEAP1) complex mediates ubiquitination and degradation of NFE2L2/NRF2, a transcription factor regulating expression of many cytoprotective genes. In response to oxidative stress, different electrophile metabolites trigger non-enzymatic covalent modifications of highly reactive cysteine residues in KEAP1, leading to inactivate the ubiquitin ligase activity of the BCR(KEAP1) complex, promoting NFE2L2/NRF2 nuclear accumulation and expression of phase II detoxifying enzymes. In response to selective autophagy, KEAP1 is sequestered in inclusion bodies following its interaction with SQSTM1/p62, leading to inactivation of the BCR(KEAP1) complex and activation of NFE2L2/NRF2. The BCR(KEAP1) complex also mediates ubiquitination of SQSTM1/p62, increasing SQSTM1/p62 sequestering activity and degradation. The BCR(KEAP1) complex also targets BPTF and PGAM5 for ubiquitination and degradation by the proteasome. This is Kelch-like ECH-associated protein 1 from Homo sapiens (Human).